Reading from the N-terminus, the 76-residue chain is Omega-scoloptoxin(13)-Ssm2b (76 aa).

Positions 1 to 22 (MAYIYALIFAIVVCMNTDVIQA) are cleaved as a signal peptide.

This sequence belongs to the scoloptoxin-13 family. Post-translationally, contains 3 disulfide bonds. Expressed by the venom gland.

It is found in the secreted. Inhibits voltage-gated calcium channel (Cav) currents. The sequence is that of Omega-scoloptoxin(13)-Ssm2b from Scolopendra mutilans (Chinese red-headed centipede).